The following is a 93-amino-acid chain: U12-lycotoxin-Ls1c (93 aa).

Residues 1 to 18 (MKFAVILLFSLVVLAVAS) form the signal peptide. A propeptide spanning residues 19 to 38 (ESVEEVRREIDIEDLPEQQR) is cleaved from the precursor.

Belongs to the neurotoxin 31 family. Post-translationally, contains 5 disulfide bonds. Expressed by the venom gland.

The protein localises to the secreted. This is U12-lycotoxin-Ls1c from Lycosa singoriensis (Wolf spider).